Here is a 205-residue protein sequence, read N- to C-terminus: uncharacterized protein (205 aa).

The interval M1–K42 is disordered. The span at T14–P24 shows a compositional bias: basic residues. Basic and acidic residues predominate over residues S30–I40. An RRM domain is found at P47–D122. Residues P170 to S191 form a disordered region.

This is an uncharacterized protein from Arabidopsis thaliana (Mouse-ear cress).